The following is a 234-amino-acid chain: Enolase-phosphatase E1 (234 aa).

Aspartate 10 and glutamate 12 together coordinate Mg(2+). Substrate contacts are provided by residues 125 to 126 (SS) and lysine 162. Aspartate 188 is a Mg(2+) binding site.

The protein belongs to the HAD-like hydrolase superfamily. MasA/MtnC family. As to quaternary structure, monomer. Requires Mg(2+) as cofactor.

It localises to the cytoplasm. The protein resides in the nucleus. The enzyme catalyses 5-methylsulfanyl-2,3-dioxopentyl phosphate + H2O = 1,2-dihydroxy-5-(methylsulfanyl)pent-1-en-3-one + phosphate. Its pathway is amino-acid biosynthesis; L-methionine biosynthesis via salvage pathway; L-methionine from S-methyl-5-thio-alpha-D-ribose 1-phosphate: step 3/6. It functions in the pathway amino-acid biosynthesis; L-methionine biosynthesis via salvage pathway; L-methionine from S-methyl-5-thio-alpha-D-ribose 1-phosphate: step 4/6. Functionally, bifunctional enzyme that catalyzes the enolization of 2,3-diketo-5-methylthiopentyl-1-phosphate (DK-MTP-1-P) into the intermediate 2-hydroxy-3-keto-5-methylthiopentenyl-1-phosphate (HK-MTPenyl-1-P), which is then dephosphorylated to form the acireductone 1,2-dihydroxy-3-keto-5-methylthiopentene (DHK-MTPene). The protein is Enolase-phosphatase E1 (utr4) of Neurospora crassa (strain ATCC 24698 / 74-OR23-1A / CBS 708.71 / DSM 1257 / FGSC 987).